We begin with the raw amino-acid sequence, 202 residues long: Putative chromophore lyase CpcV (202 aa).

Belongs to the CpcS/CpeS biliprotein lyase family.

Covalently attaches a chromophore to Cys residue(s) of phycobiliproteins. This chain is Putative chromophore lyase CpcV (cpcV), found in Picosynechococcus sp. (strain ATCC 27264 / PCC 7002 / PR-6) (Agmenellum quadruplicatum).